The sequence spans 740 residues: Isocitrate dehydrogenase [NADP] 2 (740 aa).

NADP(+)-binding residues include Asn-83 and Ser-85. 5 residues coordinate D-threo-isocitrate: Ser-130, Asn-133, Arg-137, Arg-143, and Lys-253. Position 133 (Asn-133) interacts with NADP(+). Residue Asp-348 coordinates Mg(2+). D-threo-isocitrate contacts are provided by Tyr-418 and Arg-546. Asp-547 and Asp-551 together coordinate Mg(2+). NADP(+) contacts are provided by Ser-584, His-588, Arg-599, Asp-601, and Arg-648.

This sequence belongs to the monomeric-type IDH family. As to quaternary structure, monomer. Requires Mg(2+) as cofactor. It depends on Mn(2+) as a cofactor.

It catalyses the reaction D-threo-isocitrate + NADP(+) = 2-oxoglutarate + CO2 + NADPH. Its activity is regulated as follows. IDH activity is not significantly affected by monovalent cations. The combined addition of Mn(2+) and another divalent cation results in the decrease of the activity. Functionally, catalyzes the oxidative decarboxylation of isocitrate to 2-oxoglutarate and carbon dioxide with the concomitant reduction of NADP(+). Cannot use NAD(+). The sequence is that of Isocitrate dehydrogenase [NADP] 2 from Psychrobacter sp. (strain 13A).